The sequence spans 89 residues: Small ribosomal subunit protein uS15 (89 aa).

Belongs to the universal ribosomal protein uS15 family. In terms of assembly, part of the 30S ribosomal subunit. Forms a bridge to the 50S subunit in the 70S ribosome, contacting the 23S rRNA.

Functionally, one of the primary rRNA binding proteins, it binds directly to 16S rRNA where it helps nucleate assembly of the platform of the 30S subunit by binding and bridging several RNA helices of the 16S rRNA. In terms of biological role, forms an intersubunit bridge (bridge B4) with the 23S rRNA of the 50S subunit in the ribosome. The sequence is that of Small ribosomal subunit protein uS15 from Nitrosococcus oceani (strain ATCC 19707 / BCRC 17464 / JCM 30415 / NCIMB 11848 / C-107).